We begin with the raw amino-acid sequence, 429 residues long: Histidine--tRNA ligase (429 aa).

It belongs to the class-II aminoacyl-tRNA synthetase family. Homodimer.

It localises to the cytoplasm. It catalyses the reaction tRNA(His) + L-histidine + ATP = L-histidyl-tRNA(His) + AMP + diphosphate + H(+). This Pseudomonas aeruginosa (strain LESB58) protein is Histidine--tRNA ligase.